Consider the following 152-residue polypeptide: Transcriptional repressor NrdR (152 aa).

A zinc finger spans residues 3-34 (CPYCSYNESKVVDSRSTEDSISIRRRRECLEC). Residues 49-139 (ILVIKKNLNR…VYRQFKDINT (91 aa)) form the ATP-cone domain.

The protein belongs to the NrdR family. It depends on Zn(2+) as a cofactor.

Negatively regulates transcription of bacterial ribonucleotide reductase nrd genes and operons by binding to NrdR-boxes. The polypeptide is Transcriptional repressor NrdR (Clostridium tetani (strain Massachusetts / E88)).